The primary structure comprises 31 residues: Photosystem II reaction center protein T (31 aa).

A helical membrane pass occupies residues 3–23; sequence ALVYVFLLVGTLMVIFFAIFF.

The protein belongs to the PsbT family. In terms of assembly, PSII is composed of 1 copy each of membrane proteins PsbA, PsbB, PsbC, PsbD, PsbE, PsbF, PsbH, PsbI, PsbJ, PsbK, PsbL, PsbM, PsbT, PsbX, PsbY, PsbZ, Psb30/Ycf12, at least 3 peripheral proteins of the oxygen-evolving complex and a large number of cofactors. It forms dimeric complexes.

Its subcellular location is the plastid. It is found in the chloroplast thylakoid membrane. Found at the monomer-monomer interface of the photosystem II (PS II) dimer, plays a role in assembly and dimerization of PSII. PSII is a light-driven water plastoquinone oxidoreductase, using light energy to abstract electrons from H(2)O, generating a proton gradient subsequently used for ATP formation. The protein is Photosystem II reaction center protein T of Gracilaria tenuistipitata var. liui (Red alga).